The chain runs to 251 residues: 1-(5-phosphoribosyl)-5-[(5-phosphoribosylamino)methylideneamino] imidazole-4-carboxamide isomerase (251 aa).

Catalysis depends on aspartate 8, which acts as the Proton acceptor. The active-site Proton donor is aspartate 131.

It belongs to the HisA/HisF family.

Its subcellular location is the cytoplasm. It carries out the reaction 1-(5-phospho-beta-D-ribosyl)-5-[(5-phospho-beta-D-ribosylamino)methylideneamino]imidazole-4-carboxamide = 5-[(5-phospho-1-deoxy-D-ribulos-1-ylimino)methylamino]-1-(5-phospho-beta-D-ribosyl)imidazole-4-carboxamide. It functions in the pathway amino-acid biosynthesis; L-histidine biosynthesis; L-histidine from 5-phospho-alpha-D-ribose 1-diphosphate: step 4/9. In Burkholderia cenocepacia (strain ATCC BAA-245 / DSM 16553 / LMG 16656 / NCTC 13227 / J2315 / CF5610) (Burkholderia cepacia (strain J2315)), this protein is 1-(5-phosphoribosyl)-5-[(5-phosphoribosylamino)methylideneamino] imidazole-4-carboxamide isomerase.